Here is an 811-residue protein sequence, read N- to C-terminus: G-type lectin S-receptor-like serine/threonine-protein kinase LECRK2 (811 aa).

The N-terminal stretch at methionine 1–alanine 23 is a signal peptide. The Bulb-type lectin domain occupies glutamine 24 to glycine 153. Topologically, residues glutamine 24–serine 464 are extracellular. N-linked (GlcNAc...) asparagine glycans are attached at residues asparagine 26, asparagine 39, asparagine 59, asparagine 219, asparagine 226, asparagine 237, and asparagine 242. The region spanning proline 292–arginine 344 is the EGF-like; atypical domain. 5 cysteine pairs are disulfide-bonded: cysteine 296–cysteine 314, cysteine 308–cysteine 325, cysteine 327–cysteine 343, cysteine 389–cysteine 411, and cysteine 393–cysteine 399. Residue asparagine 321 is glycosylated (N-linked (GlcNAc...) asparagine). The region spanning cysteine 352–proline 436 is the PAN domain. Residues leucine 465 to threonine 485 form a helical membrane-spanning segment. Over tyrosine 486–alanine 811 the chain is Cytoplasmic. One can recognise a Protein kinase domain in the interval glycine 521 to valine 795. Residues leucine 527–valine 535 and lysine 551 each bind ATP. Aspartate 645 acts as the Proton acceptor in catalysis.

This sequence belongs to the protein kinase superfamily. Ser/Thr protein kinase family.

It is found in the membrane. The enzyme catalyses L-seryl-[protein] + ATP = O-phospho-L-seryl-[protein] + ADP + H(+). It carries out the reaction L-threonyl-[protein] + ATP = O-phospho-L-threonyl-[protein] + ADP + H(+). Its function is as follows. Involved in resistance against the herbivorous insect brown planthopper (N.lugens, BPH). Member of the BPH3 (BPH resistance locus 3) cluster which contains LECRK1, LECRK2 and LECRK3. The protein is G-type lectin S-receptor-like serine/threonine-protein kinase LECRK2 of Oryza sativa subsp. indica (Rice).